A 328-amino-acid polypeptide reads, in one-letter code: Glucokinase (328 aa).

Ala-16–Thr-21 contributes to the ATP binding site.

This sequence belongs to the bacterial glucokinase family.

The protein localises to the cytoplasm. It catalyses the reaction D-glucose + ATP = D-glucose 6-phosphate + ADP + H(+). The chain is Glucokinase from Neisseria meningitidis serogroup C (strain 053442).